The chain runs to 104 residues: U20-lycotoxin-Ls1c (104 aa).

An N-terminal signal peptide occupies residues 1–30; that stretch reads MFSTSDQVSKMNSRILSALLILGIATCVIA. In terms of domain architecture, WAP spans 31–76; sequence GGFCPKSRHPQCDLSYKINDCCAQSDCRVGSVCCVEGCGNVCRAES. Intrachain disulfides connect Cys-34/Cys-64, Cys-42/Cys-68, Cys-51/Cys-63, Cys-52/Cys-90, and Cys-57/Cys-72.

This sequence belongs to the venom protein 11 family. 02 (wap-2) subfamily. Post-translationally, contains 5 disulfide bonds. In terms of tissue distribution, expressed by the venom gland.

The protein resides in the secreted. Its function is as follows. Has antibacterial activity. In Lycosa singoriensis (Wolf spider), this protein is U20-lycotoxin-Ls1c.